We begin with the raw amino-acid sequence, 443 residues long: Chromosome partition protein MukF (443 aa).

The interval 209 to 237 (LDETSGNLRELQDTLNAAGDKLQAQLLRI) is leucine-zipper.

This sequence belongs to the MukF family. As to quaternary structure, interacts, and probably forms a ternary complex, with MukE and MukB via its C-terminal region. The complex formation is stimulated by calcium or magnesium. It is required for an interaction between MukE and MukB.

The protein resides in the cytoplasm. It localises to the nucleoid. In terms of biological role, involved in chromosome condensation, segregation and cell cycle progression. May participate in facilitating chromosome segregation by condensation DNA from both sides of a centrally located replisome during cell division. Not required for mini-F plasmid partitioning. Probably acts via its interaction with MukB and MukE. Overexpression results in anucleate cells. It has a calcium binding activity. The sequence is that of Chromosome partition protein MukF from Actinobacillus pleuropneumoniae serotype 5b (strain L20).